The chain runs to 649 residues: MFDQIPTQRPNTPLLDVVDTPARLRELSEKQLPQLAKELREYLLYTVGQTGGHFGAGLGVVELTVALHYVLNTPDDRLVWDVGHQTYPHKILTGRREQMSSIRQLDGLSGFPKRSESEFDTFGVGHSSTSISAALGMALAAEMTDNQQQTVAVIGDGSMTAGMAFEALNHAAHADTNMMVILNDNNMSISKNVGGLANYFSKIWASKTYCALREGSKRVLTKIPQAWELARKTEEHMKGMVSPGTLFEELGFYYVGPIDGHDLERLVHDIRNMLAIPGPKLLHIITQKGKGFTPAEKDPVGYHALNKIEPKASITPISASGGAEAPAASTIKKPKYQTVFGDWLCDLAEVDPFVLGITPAMCDGSGMVEFAERFPDRFHDVAIAEQHAVTLAAGLACEKFKPVVAIYSTFLQRAYDQLVHDVALQNLDVTFAIDRAGLVGEDGPTHAGAFDISFLRCIPKIIIATPSDENECRQLLFSAYHHPGAAAVRYPRGTGPGAVIELENQHWPIGKGRELRQGKTVCFINFGVLLPDAIAVAEANNYGVCDMRWAKPLDKDLLLNMAEQYDYLVTLEENAVAGGAGAGVMELLAAEGISTPVLPLGLPDEYLDHGKRSQLLQAAGLDRASINQRINQWLSRHNGAAHDSQIHSL.

Thiamine diphosphate contacts are provided by residues histidine 84 and 125-127; that span reads GHS. Residue aspartate 156 coordinates Mg(2+). Residues 157–158, asparagine 185, phenylalanine 292, and glutamate 385 contribute to the thiamine diphosphate site; that span reads GS. Asparagine 185 serves as a coordination point for Mg(2+).

It belongs to the transketolase family. DXPS subfamily. As to quaternary structure, homodimer. It depends on Mg(2+) as a cofactor. Thiamine diphosphate serves as cofactor.

It carries out the reaction D-glyceraldehyde 3-phosphate + pyruvate + H(+) = 1-deoxy-D-xylulose 5-phosphate + CO2. It participates in metabolic intermediate biosynthesis; 1-deoxy-D-xylulose 5-phosphate biosynthesis; 1-deoxy-D-xylulose 5-phosphate from D-glyceraldehyde 3-phosphate and pyruvate: step 1/1. Functionally, catalyzes the acyloin condensation reaction between C atoms 2 and 3 of pyruvate and glyceraldehyde 3-phosphate to yield 1-deoxy-D-xylulose-5-phosphate (DXP). The chain is 1-deoxy-D-xylulose-5-phosphate synthase from Saccharophagus degradans (strain 2-40 / ATCC 43961 / DSM 17024).